A 32-amino-acid polypeptide reads, in one-letter code: Protamine-2 (32 aa).

A disordered region spans residues 1–32 (PRRRRSSSRPVRRRRARRVSRRRRRRGGRRRR).

In terms of tissue distribution, testis.

The protein localises to the nucleus. Its subcellular location is the chromosome. Protamines substitute for histones in the chromatin of sperm during the haploid phase of spermatogenesis. They compact sperm DNA into a highly condensed, stable and inactive complex. The polypeptide is Protamine-2 (Oncorhynchus mykiss (Rainbow trout)).